Consider the following 941-residue polypeptide: DNA mismatch repair protein MutS (941 aa).

613 to 620 provides a ligand contact to ATP; that stretch reads GPNMAGKS.

This sequence belongs to the DNA mismatch repair MutS family.

Its function is as follows. This protein is involved in the repair of mismatches in DNA. It is possible that it carries out the mismatch recognition step. This protein has a weak ATPase activity. In Clostridium botulinum (strain Alaska E43 / Type E3), this protein is DNA mismatch repair protein MutS.